A 226-amino-acid chain; its full sequence is UPF0173 metal-dependent hydrolase GFO_2312 (226 aa).

The protein belongs to the UPF0173 family.

This Christiangramia forsetii (strain DSM 17595 / CGMCC 1.15422 / KT0803) (Gramella forsetii) protein is UPF0173 metal-dependent hydrolase GFO_2312.